The following is a 491-amino-acid chain: Probable cobyric acid synthase (491 aa).

One can recognise a GATase cobBQ-type domain in the interval 252-444 (PVEVNIVKFS…LHGILENFEF (193 aa)). C330 serves as the catalytic Nucleophile. The active site involves H436.

This sequence belongs to the CobB/CobQ family. CobQ subfamily.

It functions in the pathway cofactor biosynthesis; adenosylcobalamin biosynthesis. Its function is as follows. Catalyzes amidations at positions B, D, E, and G on adenosylcobyrinic A,C-diamide. NH(2) groups are provided by glutamine, and one molecule of ATP is hydrogenolyzed for each amidation. The polypeptide is Probable cobyric acid synthase (Methanococcus vannielii (strain ATCC 35089 / DSM 1224 / JCM 13029 / OCM 148 / SB)).